A 418-amino-acid chain; its full sequence is Secernin-3 (418 aa).

Positions Met1–Ser5 are excised as a propeptide. Cys6 is a catalytic residue. Glyoxylic acid (Cys); alternate is present on Cys6. Cys6 is modified (pyruvic acid (Cys); alternate).

It belongs to the peptidase C69 family. Secernin subfamily.

In terms of biological role, plays a role in thermal nociception. The protein is Secernin-3 (Scrn3) of Mus musculus (Mouse).